A 78-amino-acid polypeptide reads, in one-letter code: DNA-directed RNA polymerase subunit Rpo5 (78 aa).

It belongs to the archaeal Rpo5/eukaryotic RPB5 RNA polymerase subunit family. In terms of assembly, part of the RNA polymerase complex.

The protein localises to the cytoplasm. It carries out the reaction RNA(n) + a ribonucleoside 5'-triphosphate = RNA(n+1) + diphosphate. In terms of biological role, DNA-dependent RNA polymerase (RNAP) catalyzes the transcription of DNA into RNA using the four ribonucleoside triphosphates as substrates. This is DNA-directed RNA polymerase subunit Rpo5 from Methanosarcina acetivorans (strain ATCC 35395 / DSM 2834 / JCM 12185 / C2A).